A 205-amino-acid chain; its full sequence is Small ribosomal subunit protein uS4 (205 aa).

Residues 19 to 45 form a disordered region; that stretch reads IWGRPKSPVNRREYGPGQHGQRRKGKL. One can recognise an S4 RNA-binding domain in the interval 94 to 157; it reads SRLDAVVYRA…KQLVIVLEAV (64 aa).

It belongs to the universal ribosomal protein uS4 family. Part of the 30S ribosomal subunit. Contacts protein S5. The interaction surface between S4 and S5 is involved in control of translational fidelity.

One of the primary rRNA binding proteins, it binds directly to 16S rRNA where it nucleates assembly of the body of the 30S subunit. Functionally, with S5 and S12 plays an important role in translational accuracy. This Brucella anthropi (strain ATCC 49188 / DSM 6882 / CCUG 24695 / JCM 21032 / LMG 3331 / NBRC 15819 / NCTC 12168 / Alc 37) (Ochrobactrum anthropi) protein is Small ribosomal subunit protein uS4.